The primary structure comprises 149 residues: Myosin, essential light chain (149 aa).

2 consecutive EF-hand domains span residues 7–42 (SMID…FGLN) and 79–114 (GSYE…LGEK).

Myosin is a hexamer of 2 heavy chains and 4 light chains (two regulatory light chains and two essential light chains).

The polypeptide is Myosin, essential light chain (Branchiostoma floridae (Florida lancelet)).